Here is a 627-residue protein sequence, read N- to C-terminus: 1-deoxy-D-xylulose-5-phosphate synthase (627 aa).

Thiamine diphosphate is bound by residues His72 and Gly113–Ser115. Asp144 is a Mg(2+) binding site. Residues Gly145–Ala146, Asn173, Tyr283, and Glu366 contribute to the thiamine diphosphate site. Asn173 lines the Mg(2+) pocket.

It belongs to the transketolase family. DXPS subfamily. As to quaternary structure, homodimer. Mg(2+) is required as a cofactor. Thiamine diphosphate serves as cofactor.

The enzyme catalyses D-glyceraldehyde 3-phosphate + pyruvate + H(+) = 1-deoxy-D-xylulose 5-phosphate + CO2. It participates in metabolic intermediate biosynthesis; 1-deoxy-D-xylulose 5-phosphate biosynthesis; 1-deoxy-D-xylulose 5-phosphate from D-glyceraldehyde 3-phosphate and pyruvate: step 1/1. Catalyzes the acyloin condensation reaction between C atoms 2 and 3 of pyruvate and glyceraldehyde 3-phosphate to yield 1-deoxy-D-xylulose-5-phosphate (DXP). In Macrococcus caseolyticus (strain JCSC5402) (Macrococcoides caseolyticum), this protein is 1-deoxy-D-xylulose-5-phosphate synthase.